The following is a 427-amino-acid chain: UPF0229 protein KPN78578_11640 (427 aa).

Residues 72 to 109 (RNRVHPGNDHFVQNDRIERPQGGGGGGGSGQGQASADG) form a disordered region. Positions 77 to 90 (PGNDHFVQNDRIER) are enriched in basic and acidic residues. Positions 92–102 (QGGGGGGGSGQ) are enriched in gly residues.

This sequence belongs to the UPF0229 family.

This Klebsiella pneumoniae subsp. pneumoniae (strain ATCC 700721 / MGH 78578) protein is UPF0229 protein KPN78578_11640.